The primary structure comprises 551 residues: MDELLNVASHAATFATNFALKHSISFAGKLAVQQVSSYIKRASADDQSELESVKTQLLEMIRVVTPAIELIEIMSVGENENFKSTKQLVDSLHADIEQFTKHVLSAAHSEFPPSSEKETLQKNVDTSILREMKTLLLKINDAVPLLNLSITTSGASISSSLPKSTSFSQLLRANSYIYRANVAFTGNEPLQVGPTFFLRTYKIIDNHAKSGYISNDLVMWKEEMPVCIAKMFRMPPQRLKSKDTVLAYALSLKQSFDDDRYHDEDETPVTKTISLNDVRTLFFSLSGKLLRLDDVQTPVLLLKYADDETEYSSNTAPSNWIALEALPLVSIPNESLDESDELAESLSDSEAARLQLLGIKKQESVAKKKSSFPSTIKDQPNLTLLEYLIRLCALESTTQESVLQLPDEQIALYLKDYQGRERPRDPASYNALENRSELSASPGSVSSSRHSGIFATPTFLSPWNIKNIPLVTPEVSTRQTKNVDEEDSALLMASPSVRKSNLLPQEDLISKDSVIKLKENPSVIPHSEPESSSKVINCQAKLNVEKEKKNP.

A RanBD1 domain is found at 1 to 309 (MDELLNVASH…LLLKYADDET (309 aa)). Ser-441 bears the Phosphoserine mark. The tract at residues 522-551 (SVIPHSEPESSSKVINCQAKLNVEKEKKNP) is disordered.

Its subcellular location is the nucleus. The protein is RanBD1 domain-containing protein C584.03c of Schizosaccharomyces pombe (strain 972 / ATCC 24843) (Fission yeast).